Consider the following 153-residue polypeptide: Small heat shock protein HspB (153 aa).

The region spanning 30–140 (AGTEDNYPPC…KPRRISISGS (111 aa)) is the sHSP domain.

This sequence belongs to the small heat shock protein (HSP20) family.

This is Small heat shock protein HspB (hspB) from Bradyrhizobium diazoefficiens (strain JCM 10833 / BCRC 13528 / IAM 13628 / NBRC 14792 / USDA 110).